A 611-amino-acid polypeptide reads, in one-letter code: Probable inactive purple acid phosphatase 27 (611 aa).

Positions 1–18 (MARNFLLVLLWFIVQVSS) are cleaved as a signal peptide. N-linked (GlcNAc...) asparagine glycans are attached at residues Asn-263 and Asn-271. Asp-293 contacts Fe cation. Asn-314 carries an N-linked (GlcNAc...) asparagine glycan. The Fe cation site is built by Asp-334 and Tyr-337. Position 334 (Asp-334) interacts with Zn(2+). Residues Asn-367, His-456, and His-498 each contribute to the Zn(2+) site. Asn-367 contacts substrate. 498 to 500 (HVH) contacts substrate. His-500 lines the Fe cation pocket.

The protein belongs to the metallophosphoesterase superfamily. Purple acid phosphatase family. Homodimer. Requires Fe cation as cofactor. The cofactor is Zn(2+). In terms of tissue distribution, expressed in roots, stems, leaves, flowers and siliques.

The protein localises to the secreted. The chain is Probable inactive purple acid phosphatase 27 (PAP27) from Arabidopsis thaliana (Mouse-ear cress).